The sequence spans 955 residues: 4-alpha-glucanotransferase DPE2 (955 aa).

Residue Met-1 is modified to N-acetylmethionine. CBM20 domains lie at Lys-13–Ser-122 and Ser-157–Gly-270. Residues Ser-925–Pro-955 form a disordered region.

Belongs to the disproportionating enzyme family.

The protein localises to the cytoplasm. Its subcellular location is the cytosol. The catalysed reaction is Transfers a segment of a (1-&gt;4)-alpha-D-glucan to a new position in an acceptor, which may be glucose or a (1-&gt;4)-alpha-D-glucan.. Its activity is regulated as follows. Inactivated in response to cold stress. In terms of biological role, cytosolic alpha-glucanotransferase essential for the cytosolic metabolism of maltose, an intermediate on the pathway by which starch is converted to sucrose in leaves at night. Metabolizes maltose exported from the chloroplast and is specific for beta-maltose. May play a role in freezing tolerance. Temperature drop induces inactivation of DPE2 that leads to rapid accumulation of maltose, a solute that protects cells from freezing damage. This chain is 4-alpha-glucanotransferase DPE2 (DPE2), found in Arabidopsis thaliana (Mouse-ear cress).